Consider the following 482-residue polypeptide: tRNA sulfurtransferase (482 aa).

The 105-residue stretch at 61 to 165 (LAIRDALTRI…DDRLLLIKGR (105 aa)) folds into the THUMP domain. ATP contacts are provided by residues 183–184 (LI), K265, G287, and Q296. C344 and C456 are disulfide-bonded. The Rhodanese domain occupies 404–482 (FGPNDVILDI…GFNNVKVYRP (79 aa)). C456 serves as the catalytic Cysteine persulfide intermediate.

This sequence belongs to the ThiI family.

The protein localises to the cytoplasm. It catalyses the reaction [ThiI sulfur-carrier protein]-S-sulfanyl-L-cysteine + a uridine in tRNA + 2 reduced [2Fe-2S]-[ferredoxin] + ATP + H(+) = [ThiI sulfur-carrier protein]-L-cysteine + a 4-thiouridine in tRNA + 2 oxidized [2Fe-2S]-[ferredoxin] + AMP + diphosphate. The catalysed reaction is [ThiS sulfur-carrier protein]-C-terminal Gly-Gly-AMP + S-sulfanyl-L-cysteinyl-[cysteine desulfurase] + AH2 = [ThiS sulfur-carrier protein]-C-terminal-Gly-aminoethanethioate + L-cysteinyl-[cysteine desulfurase] + A + AMP + 2 H(+). It functions in the pathway cofactor biosynthesis; thiamine diphosphate biosynthesis. In terms of biological role, catalyzes the ATP-dependent transfer of a sulfur to tRNA to produce 4-thiouridine in position 8 of tRNAs, which functions as a near-UV photosensor. Also catalyzes the transfer of sulfur to the sulfur carrier protein ThiS, forming ThiS-thiocarboxylate. This is a step in the synthesis of thiazole, in the thiamine biosynthesis pathway. The sulfur is donated as persulfide by IscS. The chain is tRNA sulfurtransferase from Escherichia coli O9:H4 (strain HS).